We begin with the raw amino-acid sequence, 1258 residues long: Serine/threonine-protein kinase Nek1 (1258 aa).

Residues 4-258 enclose the Protein kinase domain; the sequence is YVRLQKIGEG…VNSILEKGFI (255 aa). ATP contacts are provided by residues 10 to 18 and lysine 33; that span reads IGEGSFGKA. Aspartate 128 (proton acceptor) is an active-site residue. Threonine 156 is modified (phosphothreonine). Threonine 162 is modified (phosphothreonine; by autocatalysis). The disordered stretch occupies residues 330–360; it reads HEKKPLQKHKQAHQTPEKRVNTGEERRKISE. Over residues 344-360 the composition is skewed to basic and acidic residues; sequence TPEKRVNTGEERRKISE. Phosphoserine is present on residues serine 414, serine 418, serine 428, and serine 438. Disordered regions lie at residues 578 to 600, 648 to 669, and 685 to 704; these read KLRG…EADM, KSSD…SKQQ, and VDSS…KTNN. Residues 579-591 are compositionally biased toward basic and acidic residues; sequence LRGEKKEANHSEG. A Phosphoserine modification is found at serine 653. Threonine 661 is modified (phosphothreonine). Position 664 is a phosphoserine (serine 664). Positions 691–700 are enriched in basic and acidic residues; sequence DTRETSEEMQ. 6 positions are modified to phosphoserine: serine 798, serine 834, serine 868, serine 881, serine 1052, and serine 1126. The tract at residues 1118-1171 is disordered; sequence REQPGEEYSEEEESVLKNSDVEPTANGTDVADEDDNPSSESALNEEWHSDNSDG.

The protein belongs to the protein kinase superfamily. NEK Ser/Thr protein kinase family. NIMA subfamily. In terms of assembly, binds to CBY2. Found in a complex with CFAP410, NEK1 and SPATA7. Interacts with CFAP410. Interacts (via Ser-1052 phosphorylated form) with 14-3-3 proteins. The cofactor is Mg(2+). In terms of tissue distribution, high fetal expression in the brain and kidney.

The protein localises to the nucleus. It localises to the cytoplasm. Its subcellular location is the cytoskeleton. It is found in the microtubule organizing center. The protein resides in the centrosome. It catalyses the reaction L-seryl-[protein] + ATP = O-phospho-L-seryl-[protein] + ADP + H(+). The enzyme catalyses L-threonyl-[protein] + ATP = O-phospho-L-threonyl-[protein] + ADP + H(+). Functionally, phosphorylates serines and threonines, but also appears to possess tyrosine kinase activity. Involved in DNA damage checkpoint control and for proper DNA damage repair. In response to injury that includes DNA damage, NEK1 phosphorylates VDAC1 to limit mitochondrial cell death. May be implicated in the control of meiosis. Involved in cilium assembly. The polypeptide is Serine/threonine-protein kinase Nek1 (NEK1) (Homo sapiens (Human)).